The primary structure comprises 305 residues: Glycine--tRNA ligase alpha subunit (305 aa).

Belongs to the class-II aminoacyl-tRNA synthetase family. In terms of assembly, tetramer of two alpha and two beta subunits.

Its subcellular location is the cytoplasm. It carries out the reaction tRNA(Gly) + glycine + ATP = glycyl-tRNA(Gly) + AMP + diphosphate. The protein is Glycine--tRNA ligase alpha subunit of Streptococcus thermophilus (strain CNRZ 1066).